A 1847-amino-acid polypeptide reads, in one-letter code: Peripheral-type benzodiazepine receptor-associated protein 1 (1847 aa).

Disordered stretches follow at residues 57–81 (EESS…GTET), 282–318 (NQRE…EDDV), and 560–626 (SGPK…DTAS). 2 stretches are compositionally biased toward low complexity: residues 294–310 (GSTA…GAPG) and 600–613 (SLSN…IHNS). The region spanning 651 to 718 (ARIQVFLARY…PSNFVERVSD (68 aa)) is the SH3 1 domain. The disordered stretch occupies residues 728–787 (ELADSSHSSGPELSFLSGGGGGCSSGGQSSGGRSQPRPEEEATGDELSLSPPPEGLGEPL). The segment covering 744 to 757 (SGGGGGCSSGGQSS) has biased composition (gly residues). Fibronectin type-III domains are found at residues 789 to 880 (VPYP…AGAG), 882 to 974 (VPSQ…TLPA), and 979 to 1077 (APLD…PALA). 5 disordered regions span residues 1107-1174 (LGYT…EGPD), 1191-1215 (DAGP…VCHR), 1240-1307 (NSLV…ILEQ), 1322-1478 (FSIP…ESSL), and 1514-1616 (PTDG…SHQD). Positions 1122–1133 (TQDSPASLSTEM) are enriched in polar residues. A compositionally biased stretch (basic and acidic residues) spans 1203 to 1215 (LTQKEPSTEVCHR). The segment covering 1253–1266 (DIQEEEEEEEEEEE) has biased composition (acidic residues). Residues 1272–1284 (WSFQKQVAGNSIG) show a composition bias toward polar residues. Acidic residues-rich tracts occupy residues 1296–1305 (CETDSDEEIL) and 1325–1335 (PEEEEEEDEEE). Residues 1340–1352 (PGPSSSSQDPSQP) are compositionally biased toward low complexity. 2 stretches are compositionally biased toward basic and acidic residues: residues 1412 to 1421 (RPQDPREHCS) and 1546 to 1578 (AWEK…ESRG). Residues 1617–1685 (LPLRVFVALF…PCNMVAEVAV (69 aa)) form the SH3 2 domain. Disordered stretches follow at residues 1701–1747 (PPNV…PGPP) and 1818–1847 (LEGP…RVQC). The 68-residue stretch at 1756-1823 (KTSRPMVAAF…PSNFLEGPGP (68 aa)) folds into the SH3 3 domain.

Belongs to the RIMBP family. Interacts with RIMS1 and RIMS2. Interacts with TSPO. Interacts with CACNA1A. As to expression, specifically expressed in brain. High expression level in the limbic system such as the nucleus accumbens, septum, and hippocampus, as well as on the cerebellum and pineal gland. Abundant in the CA1 region of the hippocampus.

The protein resides in the cytoplasm. The protein localises to the mitochondrion. In terms of biological role, required for synaptic transmission regulation. It probably controls the recruitement of voltage-gated calcium channels to the presynaptic membrane, and modulates neurotransmitter release. The chain is Peripheral-type benzodiazepine receptor-associated protein 1 from Rattus norvegicus (Rat).